The chain runs to 503 residues: Probable zinc metalloprotease UREG_01421 (503 aa).

Residues 1-24 (MHSLSSALAGSTFVLLFLCLLASA) form the signal peptide. N105 carries N-linked (GlcNAc...) asparagine glycosylation. 3 residues coordinate Zn(2+): H176, D196, and E232. N-linked (GlcNAc...) asparagine glycosylation is present at N247. D259 is a binding site for Zn(2+). A Fibronectin type-III domain is found at 416–503 (MPRNVRVSTR…RGVAVLPFPA (88 aa)). N-linked (GlcNAc...) asparagine glycosylation is present at N429.

It belongs to the peptidase M28 family. M28B subfamily. Requires Zn(2+) as cofactor.

The protein localises to the secreted. In Uncinocarpus reesii (strain UAMH 1704), this protein is Probable zinc metalloprotease UREG_01421.